We begin with the raw amino-acid sequence, 1146 residues long: Probable transport protein MmpL12 (1146 aa).

The next 11 helical transmembrane spans lie at 25–45 (LIVIGCWIAVAAALTLLLPTL), 206–226 (VSVLIILILVYRNLVTMLVPL), 254–274 (AIVFMSAVMIGAGTDYAVFLI), 298–318 (IGKVITASAATVAVTFLAMVF), 330–350 (AIAVAITVSLLGAVTLLPAIL), 382–402 (TIHLVGSLIVLVALAGCTLLI), 826–846 (FIVIATIVIVFLILVILLRAL), 850–870 (IYLIGSVLISYLSALGIGTLV), 883–903 (LPGLSFILLVAIGADYNMLLI), 928–948 (VITSAGLIFAASMFGLVGASI), and 949–969 (NTMAQAGFTIGIGIVLDTFLV).

This sequence belongs to the resistance-nodulation-cell division (RND) (TC 2.A.6) family. MmpL subfamily.

The protein resides in the cell membrane. This is Probable transport protein MmpL12 (mmpL12) from Mycobacterium tuberculosis (strain CDC 1551 / Oshkosh).